A 177-amino-acid chain; its full sequence is GTP-dependent dephospho-CoA kinase (177 aa).

G25, Y31, D48, V49, V50, D67, K69, E124, and D147 together coordinate GTP.

Belongs to the GTP-dependent DPCK family. Monomer in solution.

The catalysed reaction is 3'-dephospho-CoA + GTP = GDP + CoA + H(+). Its pathway is cofactor biosynthesis; coenzyme A biosynthesis. Its function is as follows. Catalyzes the GTP-dependent phosphorylation of the 3'-hydroxyl group of dephosphocoenzyme A to form coenzyme A (CoA). Can also use UTP, with lower efficiency and has weak activity with ATP, but shows a strong preference for GTP as the phosphate donor. In Thermococcus kodakarensis (strain ATCC BAA-918 / JCM 12380 / KOD1) (Pyrococcus kodakaraensis (strain KOD1)), this protein is GTP-dependent dephospho-CoA kinase.